The chain runs to 475 residues: Eukaryotic translation initiation factor 3 subunit L (475 aa).

A PCI domain is found at Asp-257 to Leu-451.

Belongs to the eIF-3 subunit L family. As to quaternary structure, component of the eukaryotic translation initiation factor 3 (eIF-3) complex.

It localises to the cytoplasm. In terms of biological role, component of the eukaryotic translation initiation factor 3 (eIF-3) complex, which is involved in protein synthesis of a specialized repertoire of mRNAs and, together with other initiation factors, stimulates binding of mRNA and methionyl-tRNAi to the 40S ribosome. The eIF-3 complex specifically targets and initiates translation of a subset of mRNAs involved in cell proliferation. The protein is Eukaryotic translation initiation factor 3 subunit L of Sclerotinia sclerotiorum (strain ATCC 18683 / 1980 / Ss-1) (White mold).